The following is a 360-amino-acid chain: (+)-6a-hydroxymaackiain 3-O-methyltransferase 1 (360 aa).

Residues 202 to 205, Asp226, 226 to 227, 246 to 247, and Lys260 contribute to the S-adenosyl-L-methionine site; these read VAGG, DQ, and DM. The active-site Proton acceptor is the His264.

The protein belongs to the class I-like SAM-binding methyltransferase superfamily. Cation-independent O-methyltransferase family. COMT subfamily.

The enzyme catalyses (+)-6a-hydroxymaackiain + S-adenosyl-L-methionine = (+)-pisatin + S-adenosyl-L-homocysteine + H(+). The catalysed reaction is a 4'-hydroxyisoflavone + S-adenosyl-L-methionine = a 4'-methoxyisoflavone + S-adenosyl-L-homocysteine + H(+). In terms of biological role, methyltransferase involved in the phytoalexin pisatin biosynthesis. Has both 3- and 4'-O-methyltransferase activities. Can use (+)-6a-hydroxymaackiain, 2,7,4'-trihydroxyisoflavanone and with much less activity (+)-medicarpin as substrates, but not (-)-6a-hydroxymaackiain, daidzein, formononetin or isoliquiritigenin. May be involved in formononetin biosynthesis. The protein is (+)-6a-hydroxymaackiain 3-O-methyltransferase 1 (HMM1) of Pisum sativum (Garden pea).